The chain runs to 431 residues: CCA tRNA nucleotidyltransferase 1, mitochondrial (431 aa).

Residues 1–31 constitute a mitochondrion transit peptide; sequence MWAKLFLRPSFVNRVHLTWSCRALLTMQLKT. ATP-binding residues include Gly-61 and Arg-64. Gly-61 and Arg-64 together coordinate CTP. Mg(2+)-binding residues include Asp-74 and Asp-76. The ATP site is built by Arg-148, Asp-191, Arg-194, Arg-197, and Arg-200. Residues Arg-148, Asp-191, Arg-194, Arg-197, and Arg-200 each coordinate CTP.

Belongs to the tRNA nucleotidyltransferase/poly(A) polymerase family. In terms of assembly, monomer, and homodimer. Requires Mg(2+) as cofactor. As to expression, expressed ubiquitously during early embryogenesis.

The protein resides in the mitochondrion. It localises to the cytoplasm. The protein localises to the nucleus. It catalyses the reaction a tRNA precursor + 2 CTP + ATP = a tRNA with a 3' CCA end + 3 diphosphate. The enzyme catalyses a tRNA with a 3' CCA end + 2 CTP + ATP = a tRNA with a 3' CCACCA end + 3 diphosphate. Nucleotidyltransferase that catalyzes the addition and repair of the essential 3'-terminal CCA sequence in tRNAs, which is necessary for the attachment of amino acids to the 3' terminus of tRNA molecules, using CTP and ATP as substrates. tRNA 3'-terminal CCA addition is required both for tRNA processing and repair. Promotes tRNA repair and recycling downstream of the ribosome-associated quality control (RQC) pathway by mediating addition of the tRNA 3'-terminal CCA following cleavage by ankzf1 and repair by elac1. Also involved in tRNA surveillance by mediating tandem CCA addition to generate a CCACCA at the 3' terminus of unstable tRNAs and tRNA-like transcripts. While stable tRNAs receive only 3'-terminal CCA, unstable tRNAs beginning with GG are marked with CCACCA and rapidly degraded. The structural flexibility of RNA controls the choice between CCA versus CCACCA addition: following the first CCA addition cycle, nucleotide-binding to the active site triggers a clockwise screw motion, producing torque on the RNA. This ejects stable RNAs, whereas unstable RNAs are refolded while bound to the enzyme and subjected to a second CCA catalytic cycle. The polypeptide is CCA tRNA nucleotidyltransferase 1, mitochondrial (Danio rerio (Zebrafish)).